The sequence spans 91 residues: Large ribosomal subunit protein bL27 (91 aa).

It belongs to the bacterial ribosomal protein bL27 family. In terms of assembly, part of the 50S ribosomal subunit. Contacts protein L18.

Binds the 5S and 23S rRNAs and also the tRNA in the P site. This chain is Large ribosomal subunit protein bL27 (rpmA), found in Deinococcus radiodurans (strain ATCC 13939 / DSM 20539 / JCM 16871 / CCUG 27074 / LMG 4051 / NBRC 15346 / NCIMB 9279 / VKM B-1422 / R1).